We begin with the raw amino-acid sequence, 366 residues long: Putative [LysW]-aminoadipate semialdehyde/glutamate semialdehyde transaminase (366 aa).

Pyridoxal 5'-phosphate-binding positions include 90 to 91 (GT) and Phe-117. Arg-120 is a binding site for substrate. 202–205 (DEVQ) serves as a coordination point for pyridoxal 5'-phosphate. The residue at position 230 (Lys-230) is an N6-(pyridoxal phosphate)lysine. Ser-254 is a binding site for substrate. Residue Thr-255 participates in pyridoxal 5'-phosphate binding.

It belongs to the class-III pyridoxal-phosphate-dependent aminotransferase family. LysJ subfamily. In terms of assembly, homodimer. Requires pyridoxal 5'-phosphate as cofactor.

The protein localises to the cytoplasm. The enzyme catalyses [amino-group carrier protein]-C-terminal-gamma-(L-lysyl)-L-glutamate + 2-oxoglutarate = [amino-group carrier protein]-C-terminal-N-(1-carboxy-5-oxopentan-1-yl)-L-glutamine + L-glutamate. It catalyses the reaction [amino-group carrier protein]-C-terminal-gamma-(L-ornithyl)-L-glutamate + 2-oxoglutarate = [amino-group carrier protein]-C-terminal-gamma-(L-glutamyl-5-semialdehyde)-L-glutamate + L-glutamate. The protein operates within amino-acid biosynthesis; L-lysine biosynthesis via AAA pathway; L-lysine from L-alpha-aminoadipate (Thermus route): step 4/5. It functions in the pathway amino-acid biosynthesis; L-arginine biosynthesis. In terms of biological role, involved in both the arginine and lysine biosynthetic pathways. The sequence is that of Putative [LysW]-aminoadipate semialdehyde/glutamate semialdehyde transaminase from Pyrococcus horikoshii (strain ATCC 700860 / DSM 12428 / JCM 9974 / NBRC 100139 / OT-3).